A 434-amino-acid polypeptide reads, in one-letter code: Glutamate-1-semialdehyde 2,1-aminomutase (434 aa).

Lysine 265 carries the N6-(pyridoxal phosphate)lysine modification.

It belongs to the class-III pyridoxal-phosphate-dependent aminotransferase family. HemL subfamily. In terms of assembly, homodimer. It depends on pyridoxal 5'-phosphate as a cofactor.

The protein resides in the cytoplasm. It carries out the reaction (S)-4-amino-5-oxopentanoate = 5-aminolevulinate. It functions in the pathway porphyrin-containing compound metabolism; protoporphyrin-IX biosynthesis; 5-aminolevulinate from L-glutamyl-tRNA(Glu): step 2/2. This chain is Glutamate-1-semialdehyde 2,1-aminomutase, found in Ruminiclostridium cellulolyticum (strain ATCC 35319 / DSM 5812 / JCM 6584 / H10) (Clostridium cellulolyticum).